The sequence spans 1520 residues: Integrator complex subunit 3 homolog (1520 aa).

6 disordered regions span residues methionine 1–threonine 23, glutamine 523–valine 671, valine 689–threonine 801, aspartate 813–lysine 922, phenylalanine 1116–asparagine 1177, and glutamine 1489–glutamate 1520. Low complexity-rich tracts occupy residues glutamine 527–proline 549 and glutamine 557–proline 595. Pro residues predominate over residues proline 596 to glutamine 612. Residues glutamine 613–leucine 625 show a composition bias toward low complexity. Over residues asparagine 626–methionine 639 the composition is skewed to polar residues. 3 stretches are compositionally biased toward low complexity: residues serine 642–serine 669, proline 694–leucine 717, and glutamine 725–glutamine 735. Residues isoleucine 736–serine 752 show a composition bias toward polar residues. Low complexity predominate over residues serine 768–isoleucine 789. Polar residues predominate over residues serine 819–isoleucine 828. The span at proline 837–isoleucine 882 shows a compositional bias: low complexity. Pro residues predominate over residues glutamine 898–serine 918. Composition is skewed to low complexity over residues phenylalanine 1116–asparagine 1130 and glutamine 1137–asparagine 1177. The segment covering glutamine 1489–histidine 1504 has biased composition (polar residues).

This sequence belongs to the Integrator subunit 3 family. As to quaternary structure, component of the Integrator complex. The core complex associates with protein phosphatase 2A subunits, to form the Integrator-PP2A (INTAC) complex. Component of the SOSS complex.

Its subcellular location is the nucleus. It is found in the cytoplasm. In terms of biological role, component of the integrator complex, a multiprotein complex that terminates RNA polymerase II (Pol II) transcription in the promoter-proximal region of genes. The integrator complex provides a quality checkpoint during transcription elongation by driving premature transcription termination of transcripts that are unfavorably configured for transcriptional elongation: the complex terminates transcription by (1) catalyzing dephosphorylation of the C-terminal domain (CTD) of Pol II subunit polr2a, (2) degrading the exiting nascent RNA transcript via endonuclease activity and (3) promoting the release of Pol II from bound DNA. The integrator complex is also involved in terminating the synthesis of non-coding Pol II transcripts, such as enhancer RNAs (eRNAs), small nuclear RNAs (snRNAs), telomerase RNAs and long non-coding RNAs (lncRNAs). Functionally, component of the SOSS complex, a multiprotein complex that functions downstream of the MRN complex to promote DNA repair and G2/M checkpoint. The SOSS complex associates with single-stranded DNA at DNA lesions and influences diverse endpoints in the cellular DNA damage response including cell-cycle checkpoint activation, recombinational repair and maintenance of genomic stability. The SOSS complex is required for efficient homologous recombination-dependent repair of double-strand breaks (DSBs) and ATM-dependent signaling pathways. In the SOSS complex, it is required for the assembly of the complex and for stabilization of the complex at DNA damage sites. The sequence is that of Integrator complex subunit 3 homolog (ints3) from Dictyostelium discoideum (Social amoeba).